We begin with the raw amino-acid sequence, 699 residues long: Elongation factor G (699 aa).

One can recognise a tr-type G domain in the interval 8-288 (EDYRNFGIMA…AVVDYLPSPM (281 aa)). Residues 17 to 24 (AHIDAGKT), 86 to 90 (DTPGH), and 140 to 143 (NKMD) each bind GTP.

Belongs to the TRAFAC class translation factor GTPase superfamily. Classic translation factor GTPase family. EF-G/EF-2 subfamily.

It localises to the cytoplasm. In terms of biological role, catalyzes the GTP-dependent ribosomal translocation step during translation elongation. During this step, the ribosome changes from the pre-translocational (PRE) to the post-translocational (POST) state as the newly formed A-site-bound peptidyl-tRNA and P-site-bound deacylated tRNA move to the P and E sites, respectively. Catalyzes the coordinated movement of the two tRNA molecules, the mRNA and conformational changes in the ribosome. This chain is Elongation factor G, found in Rhizobium leguminosarum bv. trifolii (strain WSM2304).